Here is a 223-residue protein sequence, read N- to C-terminus: Deoxyribose-phosphate aldolase (223 aa).

Catalysis depends on Asp-89, which acts as the Proton donor/acceptor. The active-site Schiff-base intermediate with acetaldehyde is the Lys-154. Catalysis depends on Lys-183, which acts as the Proton donor/acceptor.

The protein belongs to the DeoC/FbaB aldolase family. DeoC type 1 subfamily.

The protein resides in the cytoplasm. It catalyses the reaction 2-deoxy-D-ribose 5-phosphate = D-glyceraldehyde 3-phosphate + acetaldehyde. Its pathway is carbohydrate degradation; 2-deoxy-D-ribose 1-phosphate degradation; D-glyceraldehyde 3-phosphate and acetaldehyde from 2-deoxy-alpha-D-ribose 1-phosphate: step 2/2. Its function is as follows. Catalyzes a reversible aldol reaction between acetaldehyde and D-glyceraldehyde 3-phosphate to generate 2-deoxy-D-ribose 5-phosphate. The protein is Deoxyribose-phosphate aldolase of Thermoanaerobacter sp. (strain X514).